We begin with the raw amino-acid sequence, 244 residues long: Phosphonates import ATP-binding protein PhnC 2 (244 aa).

An ABC transporter domain is found at 3-242 (LRVEGLKKVY…ELTDYTVDQL (240 aa)). Position 36–43 (36–43 (GPSGAGKS)) interacts with ATP.

Belongs to the ABC transporter superfamily. Phosphonates importer (TC 3.A.1.9.1) family. As to quaternary structure, the complex is composed of two ATP-binding proteins (PhnC), two transmembrane proteins (PhnE) and a solute-binding protein (PhnD).

The protein resides in the cell membrane. It catalyses the reaction phosphonate(out) + ATP + H2O = phosphonate(in) + ADP + phosphate + H(+). In terms of biological role, part of the ABC transporter complex PhnCDE involved in phosphonates import. Responsible for energy coupling to the transport system. This Halalkalibacterium halodurans (strain ATCC BAA-125 / DSM 18197 / FERM 7344 / JCM 9153 / C-125) (Bacillus halodurans) protein is Phosphonates import ATP-binding protein PhnC 2.